We begin with the raw amino-acid sequence, 319 residues long: Adenosine receptor A3 (319 aa).

The Extracellular portion of the chain corresponds to 1–15; the sequence is MEADNTTETDWLNIT. Residues N5 and N13 are each glycosylated (N-linked (GlcNAc...) asparagine). Residues 16–38 form a helical membrane-spanning segment; the sequence is YITMEAAIGLCAVVGNMLVIWVV. Residues 39–49 lie on the Cytoplasmic side of the membrane; sequence KLNPTLRTTTV. A helical membrane pass occupies residues 50-73; sequence YFIVSLALADIAVGVLVIPLAIAV. The Extracellular portion of the chain corresponds to 74-85; it reads SLQVKMHFYACL. A disulfide bond links C84 and C167. A helical transmembrane segment spans residues 86 to 107; it reads FMSCVLLIFTHASIMSLLAIAV. Residues 108–127 lie on the Cytoplasmic side of the membrane; the sequence is HRYLRVKLTVRYRTVTTQRR. A helical transmembrane segment spans residues 128–149; it reads IWLFLGLCWLVSFLVGLTPMFG. At 150 to 178 the chain is on the extracellular side; sequence WNRKATLASSQNSSTLLCHFRSVVSLDYM. N161 carries an N-linked (GlcNAc...) asparagine glycan. Residues 179–199 form a helical membrane-spanning segment; that stretch reads VFFSFITWILVPLVVMCIIYL. Residues 200-232 are Cytoplasmic-facing; that stretch reads DIFYIIRNKLSQNLTGFRETRAFYGREFKTAKS. A helical transmembrane segment spans residues 233–256; the sequence is LFLVLFLFALCWLPLSIINFVSYF. Residues 257–262 are Extracellular-facing; sequence DVKIPD. The helical transmembrane segment at 263–285 threads the bilayer; that stretch reads VAMCLGILLSHANSMMNPIVYAC. Residues 286–319 lie on the Cytoplasmic side of the membrane; the sequence is KIKKFKETYFLILRAVRLCQTSDSLDSNMEQTTE. The S-palmitoyl cysteine moiety is linked to residue C304.

This sequence belongs to the G-protein coupled receptor 1 family. In terms of processing, phosphorylation on Thr-317 and Thr-318 may be crucial for rapid desensitization. Phosphorylation on Thr-317 may be necessary for phosphorylation on Thr-318 to occur.

Its subcellular location is the cell membrane. Receptor for adenosine. The activity of this receptor is mediated by G proteins which inhibits adenylyl cyclase. The polypeptide is Adenosine receptor A3 (Adora3) (Mus musculus (Mouse)).